An 825-amino-acid polypeptide reads, in one-letter code: MFLEVADLKDGLWVWKVVFLQVCIEASGWGAEVRDSCGCGDSSSHQTDDPATALALHVACHSFKGQLVQQTLLLGTRPRVWVNNIPQEGPSLPLRQWLLPQCPSLNRSGSAMGTGWGLSGLSPTALSRDGYETETPFSPEGAFPGGGPAEEEGVPRPRAPPEPPDPGAPRPPPDPGPLPLPGSQEKPTFVVQVSTEQLLMSTGGCDKEPPRGQGVDTRGDRTQEGGEKPREQREGPRPEQGPDIPGQQEESPQQEPSSERGDSVGEREARSPGHEGEGGGEWPGISGERRESPGEWGADVPRGRGEGAGEWGSDVPKDRGEGGREWGPEAAQEHGEAARDWTSESPRTLGEDARDWGSSSRDAAGSSPCALRGSLAPERLGDGPWPAWPSPQEREPGPRDRVESPREWGGTESPRGWEAGPREWGPSPGGRGDGPRRRPRKRRGRKGRMGRQLETTATSASATGGPAEEAGASAPEGQAGGGPRGRARGPRQQARRRHGPQRRRGPPQAGEEGPGDATLVLGLGTTSGEQRADQSQTLPALAGAPTAHAHAVPGPGPAAATLGGRGRRGSWRGGRRGGGAGASGGGRGGRGRGRGGRRGSGLSGTREDAGSPSARRGEQRRRGHGPPAAGAAQVSTRGRRARGQRTGEEAQDGLLPRGRDRLPLRPGDSNQRVERPGHPRGGHGAINAPSAPDASPPHHPRRWVSQQRQRLWRQFRVGGGFPPPPPTRPPPVLLPLLRLTCAGDPGASRPGSRRPARRPRGELTPQRPSPFAPQEEGLRAESCVDDGAIAPDTDTASGEVPEAGPSLSSTMCQMGRPRPSPKSPR.

The tract at residues 126–825 is disordered; that stretch reads LSRDGYETET…RPRPSPKSPR (700 aa). Residues 157–180 are compositionally biased toward pro residues; it reads PRAPPEPPDPGAPRPPPDPGPLPL. The span at 191–200 shows a compositional bias: polar residues; sequence VQVSTEQLLM. Basic and acidic residues predominate over residues 217–237; sequence TRGDRTQEGGEKPREQREGPR. Positions 247–256 are enriched in low complexity; that stretch reads QQEESPQQEP. Basic and acidic residues-rich tracts occupy residues 257 to 277, 315 to 342, and 392 to 406; these read SSER…HEGE, VPKD…RDWT, and QERE…ESPR. A compositionally biased stretch (basic residues) spans 437–449; the sequence is RRPRKRRGRKGRM. The segment covering 455–477 has biased composition (low complexity); that stretch reads TTATSASATGGPAEEAGASAPEG. Residues 485–505 show a composition bias toward basic residues; the sequence is GRARGPRQQARRRHGPQRRRG. Residues 524–536 are compositionally biased toward polar residues; the sequence is GTTSGEQRADQSQ. The segment covering 537–562 has biased composition (low complexity); that stretch reads TLPALAGAPTAHAHAVPGPGPAAATL. The span at 565 to 575 shows a compositional bias: basic residues; that stretch reads RGRRGSWRGGR. Positions 576–588 are enriched in gly residues; the sequence is RGGGAGASGGGRG. A compositionally biased stretch (pro residues) spans 721-733; the sequence is FPPPPPTRPPPVL. The span at 734–750 shows a compositional bias: low complexity; sequence LPLLRLTCAGDPGASRP.

As to expression, expressed in neurons.

Its subcellular location is the nucleus. Might have DNA-binding ability. This is 5E5 antigen from Rattus norvegicus (Rat).